The sequence spans 240 residues: Phosphoribosylaminoimidazole-succinocarboxamide synthase (240 aa).

Belongs to the SAICAR synthetase family.

The catalysed reaction is 5-amino-1-(5-phospho-D-ribosyl)imidazole-4-carboxylate + L-aspartate + ATP = (2S)-2-[5-amino-1-(5-phospho-beta-D-ribosyl)imidazole-4-carboxamido]succinate + ADP + phosphate + 2 H(+). It functions in the pathway purine metabolism; IMP biosynthesis via de novo pathway; 5-amino-1-(5-phospho-D-ribosyl)imidazole-4-carboxamide from 5-amino-1-(5-phospho-D-ribosyl)imidazole-4-carboxylate: step 1/2. This chain is Phosphoribosylaminoimidazole-succinocarboxamide synthase, found in Limosilactobacillus fermentum (strain NBRC 3956 / LMG 18251) (Lactobacillus fermentum).